Consider the following 123-residue polypeptide: Putative iron-sulfur cluster insertion protein ErpA (123 aa).

Iron-sulfur cluster is bound by residues C51, C115, and C117.

It belongs to the HesB/IscA family. In terms of assembly, homodimer. Iron-sulfur cluster serves as cofactor.

In terms of biological role, required for insertion of 4Fe-4S clusters. The sequence is that of Putative iron-sulfur cluster insertion protein ErpA from Burkholderia multivorans (strain ATCC 17616 / 249).